We begin with the raw amino-acid sequence, 366 residues long: Histidinol-phosphate aminotransferase 2 (366 aa).

Residues 1-11 (MQVKDQLSSLQ) show a composition bias toward polar residues. The interval 1–21 (MQVKDQLSSLQPYKPGKSPEQ) is disordered. An N6-(pyridoxal phosphate)lysine modification is found at lysine 222.

The protein belongs to the class-II pyridoxal-phosphate-dependent aminotransferase family. Histidinol-phosphate aminotransferase subfamily. As to quaternary structure, homodimer. Pyridoxal 5'-phosphate serves as cofactor.

The catalysed reaction is L-histidinol phosphate + 2-oxoglutarate = 3-(imidazol-4-yl)-2-oxopropyl phosphate + L-glutamate. It participates in amino-acid biosynthesis; L-histidine biosynthesis; L-histidine from 5-phospho-alpha-D-ribose 1-diphosphate: step 7/9. This chain is Histidinol-phosphate aminotransferase 2, found in Bacillus thuringiensis subsp. konkukian (strain 97-27).